We begin with the raw amino-acid sequence, 306 residues long: Galactosylgalactosylxylosylprotein 3-beta-glucuronosyltransferase I (306 aa).

Over 1–11 (MSEVRIRPRQV) the chain is Cytoplasmic. Residues 12 to 29 (LILIIVFLVVLMMVHRNG) form a helical; Signal-anchor for type II membrane protein membrane-spanning segment. The Lumenal portion of the chain corresponds to 30-306 (KRTCQGPEYL…GQRSDGGMEV (277 aa)). The N-linked (GlcNAc...) asparagine glycan is linked to Asn90. Asp163 lines the Mn(2+) pocket. Residue Glu252 is the Proton acceptor of the active site.

The protein belongs to the glycosyltransferase 43 family. Mn(2+) is required as a cofactor.

The protein resides in the golgi apparatus membrane. The enzyme catalyses 3-O-(beta-D-galactosyl-(1-&gt;3)-beta-D-galactosyl-(1-&gt;4)-beta-D-xylosyl)-L-seryl-[protein] + UDP-alpha-D-glucuronate = 3-O-(beta-D-GlcA-(1-&gt;3)-beta-D-Gal-(1-&gt;3)-beta-D-Gal-(1-&gt;4)-beta-D-Xyl)-L-seryl-[protein] + UDP + H(+). It participates in protein modification; protein glycosylation. Functionally, involved in the biosynthesis of L2/HNK-1 carbohydrate epitope on both glycolipids and glycoproteins. Shows strict specificity for Gal-beta-1,3-Gal-beta-1,4-Xyl, exhibiting negligible incorporation into other galactoside substrates. This chain is Galactosylgalactosylxylosylprotein 3-beta-glucuronosyltransferase I (GlcAT-I), found in Drosophila melanogaster (Fruit fly).